Consider the following 141-residue polypeptide: MGMIQEFKEFAVKGNAMDLAVGVIIGGAFGKIVDSIVGDLIMPLVSRVVGKLDFSNLFFVLGDNPNNLTALADLKKAGIAVFAYGSFLTILVNFIILAFIIFMMVKQMNRMRKEEPAAPAEAPATPEDVLLLREIRDSLKK.

2 helical membrane passes run 21 to 41 (VGVI…GDLI) and 85 to 105 (GSFL…FMMV).

It belongs to the MscL family. Homopentamer.

The protein localises to the cell inner membrane. Functionally, channel that opens in response to stretch forces in the membrane lipid bilayer. May participate in the regulation of osmotic pressure changes within the cell. This is Large-conductance mechanosensitive channel from Dechloromonas aromatica (strain RCB).